Here is a 337-residue protein sequence, read N- to C-terminus: Heat-inducible transcription repressor HrcA (337 aa).

The protein belongs to the HrcA family.

In terms of biological role, negative regulator of class I heat shock genes (grpE-dnaK-dnaJ and groELS operons). Prevents heat-shock induction of these operons. In Polaromonas naphthalenivorans (strain CJ2), this protein is Heat-inducible transcription repressor HrcA.